A 389-amino-acid chain; its full sequence is Gastricsin (389 aa).

Positions 1–16 (MKWMVVALVCLQLLEA) are cleaved as a signal peptide. A propeptide spans 17–59 (KVTKVTLKKFKSIRENLREQGLLEDFLKTNHYDPAQKYHFGDF) (activation peptide). A Peptidase A1 domain is found at 73 to 386 (YFGEISIGTP…DMGNNRVGFA (314 aa)). Asp-91 is a catalytic residue. 2 cysteine pairs are disulfide-bonded: Cys-104/Cys-109 and Cys-268/Cys-272. The active site involves Asp-277. The cysteines at positions 311 and 344 are disulfide-linked.

It belongs to the peptidase A1 family.

It is found in the secreted. It catalyses the reaction More restricted specificity than pepsin A, but shows preferential cleavage at Tyr-|-Xaa bonds. High activity on hemoglobin.. Functionally, hydrolyzes a variety of proteins. The chain is Gastricsin (PGC) from Suncus murinus (Asian house shrew).